We begin with the raw amino-acid sequence, 244 residues long: Carboxy-S-adenosyl-L-methionine synthase (244 aa).

S-adenosyl-L-methionine-binding positions include Y40, 65–67, 90–91, 119–120, N134, and R201; these read GCS, DN, and DI.

Belongs to the class I-like SAM-binding methyltransferase superfamily. Cx-SAM synthase family. Homodimer.

It carries out the reaction prephenate + S-adenosyl-L-methionine = carboxy-S-adenosyl-L-methionine + 3-phenylpyruvate + H2O. Functionally, catalyzes the conversion of S-adenosyl-L-methionine (SAM) to carboxy-S-adenosyl-L-methionine (Cx-SAM). The protein is Carboxy-S-adenosyl-L-methionine synthase of Geobacter sp. (strain M21).